Here is a 462-residue protein sequence, read N- to C-terminus: Chitinase-like mite allergen Der f 18.0101 (462 aa).

The first 25 residues, 1–25 (MTRFSLTVLAVLAACFGSNIRPNVA), serve as a signal peptide directing secretion. The 350-residue stretch at 29–378 (PKTVCYYESW…HAIQSNYYHG (350 aa)) folds into the GH18 domain. Cysteine 33 and cysteine 58 are disulfide-bonded. Asparagine 338 carries N-linked (GlcNAc...) asparagine glycosylation. Residues 404–462 (VFHCHEEGFFRDKTYCATYYECKKGDFGLEKTVHHCANHLQAFDEVSRTCIDHTKIPGC) form the Chitin-binding type-2 domain. Cysteine 439 and cysteine 453 are disulfide-bonded.

Belongs to the glycosyl hydrolase 18 family. Chitinase class II subfamily. In terms of tissue distribution, expressed in the upper digestive tract. Staining is observed in the ventriculus, and in very rare individuals, also in the intestine or esophagus. No expression in fecal pellets neither inside the rectum nor defecated outside of the body.

It is found in the secreted. Functionally, probably a non-catalytic chitinase-like protein, which binds to insoluble chitin and enhances the activity of the catalytic chitinases. Has weak chitin-binding activity. The sequence is that of Chitinase-like mite allergen Der f 18.0101 from Dermatophagoides farinae (American house dust mite).